A 494-amino-acid chain; its full sequence is Transcription factor SOX-9 (494 aa).

Disordered regions lie at residues Met1–Glu66 and Glu159–Val275. Over residues Ser27–Asp42 the composition is skewed to low complexity. 2 stretches are compositionally biased toward basic and acidic residues: residues Gly56–Glu66 and Glu159–Tyr174. Residues Glu63–Pro103 are dimerization (DIM). The tract at residues Glu63–Pro103 is PQA. Ser64 is modified (phosphoserine). The HMG box DNA-binding region spans Val105–Lys173. A Phosphoserine modification is found at Ser181. The segment covering Ser211–His222 has biased composition (low complexity). The transactivation domain (TAM) stretch occupies residues Pro224–Pro309. 2 consecutive short sequence motifs (9aaTAD) follow at residues Ile277 to Ser286 and Asp292 to Leu300. Positions Ser326–Ala337 are enriched in low complexity. A disordered region spans residues Ser326–Gln402. The span at Pro344–Pro353 shows a compositional bias: pro residues. Residues Arg372–Pro494 form a transactivation domain (TAC) region. Residue Lys376 forms a Glycyl lysine isopeptide (Lys-Gly) (interchain with G-Cter in SUMO) linkage. Residues Glu378–Glu387 show a composition bias toward polar residues. A compositionally biased stretch (low complexity) spans Gln388–Gln402. A 9aaTAD 3 motif is present at residues Gly445–Tyr453. The disordered stretch occupies residues Tyr462–Pro494. Residues Gly470–Pro494 show a composition bias toward polar residues.

As to quaternary structure, interacts with SNAI2; triggers neural crest delamination in a phosphorylation dependent manner. Interacts with UBE2I. Phosphorylated at Ser-181 in the developing neural tube. Phosphorylation at either Ser-64 or Ser-181 is required for sumoylation, but phosphorylation is not dependent on sumoylation. Sumoylation is enhanced by PKA. Phosphorylation is required for interaction with SNAI2 to trigger neural crest delamination and for an efficient trunk neural crest delamination, whereas sumoylation plays a less significant role. Phosphorylation and sumoylation are induced by BMP signaling pathway. In terms of processing, sumoylated at Lys-376; phosphorylation at either Ser-64 or Ser-181 is required for sumoylation. Sumoylation is induced by BMP signaling pathway.

The protein resides in the nucleus. Its function is as follows. Transcription factor that plays a key role in chondrocytes differentiation and skeletal development. Specifically binds the 5'-ACAAAG-3' DNA motif present in enhancers and super-enhancers and promotes expression of genes important for chondrogenesis, including COL2A1. Plays a central role in successive steps of chondrocyte differentiation. Absolutely required for precartilaginous condensation, the first step in chondrogenesis during which skeletal progenitors differentiate into prechondrocytes. Together with SOX5 and SOX6, required for overt chondrogenesis when condensed prechondrocytes differentiate into early stage chondrocytes, the second step in chondrogenesis. Later, required to direct hypertrophic maturation and block osteoblast differentiation of growth plate chondrocytes: maintains chondrocyte columnar proliferation, delays prehypertrophy and then prevents osteoblastic differentiation of chondrocytes. Also required for chondrocyte hypertrophy, both indirectly, by keeping the lineage fate of chondrocytes, and directly, by remaining present in upper hypertrophic cells. Low lipid levels are the main nutritional determinant for chondrogenic commitment of skeletal progenitor cells: when lipids levels are low, FOXO transcription factors promote expression of SOX9, which induces chondrogenic commitment and suppresses fatty acid oxidation. In addition to cartilage development, also acts as a regulator of proliferation and differentiation in epithelial stem/progenitor cells. In response to bone morphogenetic protein stimulus, phosphorylation is induced and then sumoylation, allowing cooperation with SNAI2 to trigger neural crest delamination. This Gallus gallus (Chicken) protein is Transcription factor SOX-9.